The chain runs to 150 residues: MAKRVSLPDVVISAPKAVFKPAKEEALACILPKYYKSMADVSIKTNSVIDKCWFCNQDLVFRPISIETFKGGEVGYFCSKICRDSLASMVKSHVALREEPKISLLPLVFYEDKEKVINTINLLRDKDGVYGSCYFKENSQIIDISLRSLL.

The protein belongs to the chordopoxvirinae VLTF-2 family. As to quaternary structure, interacts with itself. Interacts with the late transcription factors VLTF-1.

Functionally, acts with RNA polymerase to initiate transcription from late gene promoters. This chain is Viral late gene transcription factor 2 (VLTF2), found in Homo sapiens (Human).